The chain runs to 813 residues: Protein PPP4R3C1 (813 aa).

Residues 730–813 (NESESAIEGQ…PPPKRPNLST (84 aa)) are disordered. Positions 777 to 788 (YDTDDENDDDPY) are enriched in acidic residues.

The protein belongs to the SMEK family.

In Mus musculus (Mouse), this protein is Protein PPP4R3C1.